Consider the following 174-residue polypeptide: Large ribosomal subunit protein uL10 (174 aa).

The protein belongs to the universal ribosomal protein uL10 family. In terms of assembly, part of the ribosomal stalk of the 50S ribosomal subunit. The N-terminus interacts with L11 and the large rRNA to form the base of the stalk. The C-terminus forms an elongated spine to which L12 dimers bind in a sequential fashion forming a multimeric L10(L12)X complex.

Its function is as follows. Forms part of the ribosomal stalk, playing a central role in the interaction of the ribosome with GTP-bound translation factors. The sequence is that of Large ribosomal subunit protein uL10 from Geotalea uraniireducens (strain Rf4) (Geobacter uraniireducens).